Reading from the N-terminus, the 223-residue chain is 7-cyano-7-deazaguanine synthase (223 aa).

An ATP-binding site is contributed by 11-21 (ISGGMDSALAA). C189, C197, C200, and C203 together coordinate Zn(2+).

Belongs to the QueC family. Requires Zn(2+) as cofactor.

The catalysed reaction is 7-carboxy-7-deazaguanine + NH4(+) + ATP = 7-cyano-7-deazaguanine + ADP + phosphate + H2O + H(+). Its pathway is purine metabolism; 7-cyano-7-deazaguanine biosynthesis. Catalyzes the ATP-dependent conversion of 7-carboxy-7-deazaguanine (CDG) to 7-cyano-7-deazaguanine (preQ(0)). This is 7-cyano-7-deazaguanine synthase from Campylobacter fetus subsp. fetus (strain 82-40).